Reading from the N-terminus, the 664-residue chain is Macrolide export ATP-binding/permease protein MacB (664 aa).

Positions 8–245 (LELVDVHRTY…AGPSVPLTLD (238 aa)) constitute an ABC transporter domain. Position 44 to 51 (44 to 51 (GSSGSGKS)) interacts with ATP. 4 helical membrane-spanning segments follow: residues 283–303 (LLSV…MALG), 543–563 (GAIA…IMLV), 602–622 (IIGI…AGWA), and 627–647 (IVSI…FGLW).

It belongs to the ABC transporter superfamily. Macrolide exporter (TC 3.A.1.122) family. Homodimer.

The protein localises to the cell inner membrane. Functionally, non-canonical ABC transporter that contains transmembrane domains (TMD), which form a pore in the inner membrane, and an ATP-binding domain (NBD), which is responsible for energy generation. Confers resistance against macrolides. In Chlorobium luteolum (strain DSM 273 / BCRC 81028 / 2530) (Pelodictyon luteolum), this protein is Macrolide export ATP-binding/permease protein MacB.